We begin with the raw amino-acid sequence, 332 residues long: UPF0194 membrane protein YbhG (332 aa).

The first 16 residues, 1 to 16 (MMKKTVVIGLAVVVLA), serve as a signal peptide directing secretion. Residues 108 to 209 (EEIAQAAAAV…LNLQDSTLIA (102 aa)) adopt a coiled-coil conformation.

This sequence belongs to the UPF0194 family.

It is found in the periplasm. The polypeptide is UPF0194 membrane protein YbhG (Shigella dysenteriae serotype 1 (strain Sd197)).